Consider the following 49-residue polypeptide: Defensin-like protein 1 (49 aa).

4 cysteine pairs are disulfide-bonded: cysteine 3-cysteine 49, cysteine 14-cysteine 35, cysteine 20-cysteine 43, and cysteine 24-cysteine 45.

The protein belongs to the DEFL family.

It localises to the secreted. Its function is as follows. Possesses antimicrobial activity sensitive to inorganic cations. Binds specifically to the fungal plasma membrane. Has no inhibitory effect on insect gut alpha-amylase. The chain is Defensin-like protein 1 from Clitoria ternatea (Butterfly pea).